The primary structure comprises 268 residues: Type III pantothenate kinase (268 aa).

18 to 25 contacts ATP; it reads DIGNTTTT. Substrate is bound by residues Tyr-108 and 115-118; that span reads GADR. Asp-117 (proton acceptor) is an active-site residue. Asp-138 is a K(+) binding site. Position 141 (Thr-141) interacts with ATP. Thr-193 is a binding site for substrate.

It belongs to the type III pantothenate kinase family. As to quaternary structure, homodimer. NH4(+) is required as a cofactor. Requires K(+) as cofactor.

It is found in the cytoplasm. It catalyses the reaction (R)-pantothenate + ATP = (R)-4'-phosphopantothenate + ADP + H(+). It functions in the pathway cofactor biosynthesis; coenzyme A biosynthesis; CoA from (R)-pantothenate: step 1/5. Its function is as follows. Catalyzes the phosphorylation of pantothenate (Pan), the first step in CoA biosynthesis. The protein is Type III pantothenate kinase of Chlorobaculum parvum (strain DSM 263 / NCIMB 8327) (Chlorobium vibrioforme subsp. thiosulfatophilum).